The following is a 413-amino-acid chain: N-acylneuraminate cytidylyltransferase (413 aa).

This sequence belongs to the CMP-NeuNAc synthase family. It depends on Mg(2+) as a cofactor. Mn(2+) is required as a cofactor.

It is found in the cytoplasm. The catalysed reaction is an N-acylneuraminate + CTP = a CMP-N-acyl-beta-neuraminate + diphosphate. In terms of biological role, catalyzes the formation of CMP-N-acetylneuraminic acid (CMP-NeuNAc), which is essential for the formation of the capsule. This chain is N-acylneuraminate cytidylyltransferase (neuA), found in Streptococcus agalactiae serotype V (strain ATCC BAA-611 / 2603 V/R).